The following is a 286-amino-acid chain: 2-dehydro-3-deoxyphosphooctonate aldolase (286 aa).

Belongs to the KdsA family.

It is found in the cytoplasm. The enzyme catalyses D-arabinose 5-phosphate + phosphoenolpyruvate + H2O = 3-deoxy-alpha-D-manno-2-octulosonate-8-phosphate + phosphate. Its pathway is carbohydrate biosynthesis; 3-deoxy-D-manno-octulosonate biosynthesis; 3-deoxy-D-manno-octulosonate from D-ribulose 5-phosphate: step 2/3. The protein operates within bacterial outer membrane biogenesis; lipopolysaccharide biosynthesis. In Shewanella denitrificans (strain OS217 / ATCC BAA-1090 / DSM 15013), this protein is 2-dehydro-3-deoxyphosphooctonate aldolase.